Reading from the N-terminus, the 117-residue chain is Zinc metalloproteinase/disintegrin (117 aa).

Residues 36–117 (TPVSGNELLE…AGCPRNPFHA (82 aa)) form the Disintegrin domain. Intrachain disulfides connect cysteine 50–cysteine 65, cysteine 52–cysteine 60, cysteine 59–cysteine 82, cysteine 73–cysteine 79, cysteine 78–cysteine 103, and cysteine 91–cysteine 110. Positions 95 to 97 (RGD) match the Cell attachment site motif.

It belongs to the venom metalloproteinase (M12B) family. P-II subfamily. P-IIa sub-subfamily. Monomer. Zn(2+) serves as cofactor. In terms of tissue distribution, expressed by the venom gland.

It localises to the secreted. In terms of biological role, impairs hemostasis in the envenomed animal. Functionally, inhibits platelet aggregation and bone resorption. The chain is Zinc metalloproteinase/disintegrin from Gloydius halys (Chinese water mocassin).